The sequence spans 68 residues: Large ribosomal subunit protein uL30 (68 aa).

The protein belongs to the universal ribosomal protein uL30 family. As to quaternary structure, part of the 50S ribosomal subunit.

The sequence is that of Large ribosomal subunit protein uL30 from Bartonella tribocorum (strain CIP 105476 / IBS 506).